The primary structure comprises 133 residues: Profilin Sal k 4.0201 (133 aa).

Residues Cys-95 and Cys-117 are joined by a disulfide bond.

It belongs to the profilin family. In terms of assembly, occurs in many kinds of cells as a complex with monomeric actin in a 1:1 ratio. As to expression, expressed in pollen (at protein and mRNA level).

The protein localises to the cytoplasm. The protein resides in the cytoskeleton. In terms of biological role, binds to actin and affects the structure of the cytoskeleton. At high concentrations, profilin prevents the polymerization of actin, whereas it enhances it at low concentrations. The sequence is that of Profilin Sal k 4.0201 from Kali turgidum (Prickly saltwort).